The chain runs to 46 residues: Mu-segestritoxin-Sf1d (46 aa).

4 disulfide bridges follow: Cys3–Cys19, Cys10–Cys22, Cys18–Cys42, and Cys24–Cys40. The tract at residues Arg31–Trp33 is keys region for toxin activity.

It belongs to the neurotoxin 16 (SFI) family. Expressed by the venom gland.

It localises to the secreted. Its function is as follows. Insecticidal toxin. It inhibits insect voltage-gated sodium channels (Nav) by partially blocking the channel pore in DUM neurons from the American cockroach, not by acting as a gating modifier. The inhibition is only partially reversible after prolonged washout. In vivo, the toxin causes flaccid paralysis followed by death when injected into Heliothis virescens larvae. It also causes uncoordinated movements followed by full paralysis to sheep blowflies (Lucilia cuprina). When the toxin is fused to snowdrop lectin, it is orally active against larvae of the tomato moth (Laconobia oleracea), the rice brown planthopper (Nilaparvata lugens), and the peach-potato aphid (Myzus persicae). This Segestria florentina (Tube-web spider) protein is Mu-segestritoxin-Sf1d.